Here is a 244-residue protein sequence, read N- to C-terminus: HTH-type transcriptional regulator RdgA (244 aa).

Residues 9-62 (LKTARTAQGLSQKALGDMIGVSQAAIQKIEVGKASQTTKIVELSNNLRVRPEWL) enclose the HTH cro/C1-type domain. Residues 20-39 (QKALGDMIGVSQAAIQKIEV) constitute a DNA-binding region (H-T-H motif).

In terms of biological role, regulates pectin lyase production in response to DNA damage. In Pectobacterium carotovorum subsp. carotovorum (Erwinia carotovora subsp. carotovora), this protein is HTH-type transcriptional regulator RdgA (rdgA).